The chain runs to 325 residues: Helicase VP6-A (325 aa).

Disordered regions lie at residues 1–126 (MLLA…TNGR) and 175–231 (GVAE…PARI). Composition is skewed to basic and acidic residues over residues 8 to 18 (VIKRSSEELKQ), 32 to 54 (EGGKEDKTEPKEESKAEGSKDGE), 61 to 79 (GQKEEGGKETKDADVDRRI), and 92 to 105 (PGERANENADRGDG). Lys106 contributes to the ATP binding site. The segment covering 106–122 (KVGGGGGDADAGVGATG) has biased composition (gly residues). Basic and acidic residues predominate over residues 175–229 (GVAEQTERLRDLRRKEKNGTHAKAVERGGRKQRKESHGDAQREGVEEEKTSEEPA).

This sequence belongs to the orbivirus VP6 family. As to quaternary structure, homohexamer.

It is found in the virion. The enzyme catalyses ATP + H2O = ADP + phosphate + H(+). Its function is as follows. ATP dependent RNA helicase essential for RNA packaging and viral transcription. Possesses ss- and dsRNA-binding capacity. The sequence is that of Helicase VP6-A (Segment-9) from Bluetongue virus 11 (isolate USA) (BTV 11).